The following is a 540-amino-acid chain: L-aspartate oxidase (540 aa).

Residues 16–19 (SGAA), Lys38, 45–52 (STFYAQGG), and Asp223 contribute to the FAD site. Arg290 acts as the Proton donor/acceptor in catalysis. FAD is bound by residues Glu375 and 391 to 392 (SL).

The protein belongs to the FAD-dependent oxidoreductase 2 family. NadB subfamily. FAD is required as a cofactor.

Its subcellular location is the cytoplasm. The enzyme catalyses L-aspartate + O2 = iminosuccinate + H2O2. It carries out the reaction fumarate + L-aspartate = iminosuccinate + succinate. It participates in cofactor biosynthesis; NAD(+) biosynthesis; iminoaspartate from L-aspartate (oxidase route): step 1/1. In terms of biological role, catalyzes the oxidation of L-aspartate to iminoaspartate, the first step in the de novo biosynthesis of NAD(+). Can use either oxygen or fumarate as electron acceptors, which allows the enzyme to be functional under aerobic and anaerobic conditions. The sequence is that of L-aspartate oxidase (nadB) from Escherichia coli O157:H7.